The sequence spans 298 residues: Bifunctional protein FolD (298 aa).

NADP(+) contacts are provided by residues 165-167 (GRS), S190, and I231.

It belongs to the tetrahydrofolate dehydrogenase/cyclohydrolase family. As to quaternary structure, homodimer.

The catalysed reaction is (6R)-5,10-methylene-5,6,7,8-tetrahydrofolate + NADP(+) = (6R)-5,10-methenyltetrahydrofolate + NADPH. The enzyme catalyses (6R)-5,10-methenyltetrahydrofolate + H2O = (6R)-10-formyltetrahydrofolate + H(+). It participates in one-carbon metabolism; tetrahydrofolate interconversion. Functionally, catalyzes the oxidation of 5,10-methylenetetrahydrofolate to 5,10-methenyltetrahydrofolate and then the hydrolysis of 5,10-methenyltetrahydrofolate to 10-formyltetrahydrofolate. This is Bifunctional protein FolD from Prochlorococcus marinus subsp. pastoris (strain CCMP1986 / NIES-2087 / MED4).